A 390-amino-acid polypeptide reads, in one-letter code: NADH-quinone oxidoreductase subunit D (390 aa).

The protein belongs to the complex I 49 kDa subunit family. As to quaternary structure, NDH-1 is composed of 14 different subunits. Subunits NuoB, C, D, E, F, and G constitute the peripheral sector of the complex.

It localises to the cell inner membrane. It catalyses the reaction a quinone + NADH + 5 H(+)(in) = a quinol + NAD(+) + 4 H(+)(out). In terms of biological role, NDH-1 shuttles electrons from NADH, via FMN and iron-sulfur (Fe-S) centers, to quinones in the respiratory chain. The immediate electron acceptor for the enzyme in this species is believed to be ubiquinone. Couples the redox reaction to proton translocation (for every two electrons transferred, four hydrogen ions are translocated across the cytoplasmic membrane), and thus conserves the redox energy in a proton gradient. The chain is NADH-quinone oxidoreductase subunit D from Trichlorobacter lovleyi (strain ATCC BAA-1151 / DSM 17278 / SZ) (Geobacter lovleyi).